The primary structure comprises 595 residues: uncharacterized protein (595 aa).

A run of 9 helical transmembrane segments spans residues 64-84 (VVFL…LIVF), 86-106 (IFYA…IGVL), 239-259 (FYVI…PVAS), 281-301 (FYLW…GILP), 334-354 (VHFI…LFFI), 368-388 (MFGI…HFII), 504-524 (FIYV…SYIM), 547-567 (YLFQ…GILT), and 571-591 (IIAG…LFKF).

This sequence to M.jannaschii FlaJ.

The protein resides in the cell membrane. This is an uncharacterized protein from Methanocaldococcus jannaschii (strain ATCC 43067 / DSM 2661 / JAL-1 / JCM 10045 / NBRC 100440) (Methanococcus jannaschii).